The chain runs to 437 residues: Epsilon-sarcoglycan (437 aa).

At 1–317 the chain is on the extracellular side; the sequence is MQLPWWWELG…LKSRDYYTDF (317 aa). Residue Asn-200 is glycosylated (N-linked (GlcNAc...) asparagine). Residues 318–338 traverse the membrane as a helical segment; it reads LVTLAVPSAVALVLFLILAYI. Over 339–437 the chain is Cytoplasmic; the sequence is MCCRREGVEK…QQQTTGKWYS (99 aa). Positions 418-437 are disordered; that stretch reads QNLPHQTQIPQQQTTGKWYS.

The protein belongs to the sarcoglycan alpha/epsilon family. In terms of processing, N-glycosylated. Post-translationally, ubiquitinated, leading to its degradation by the proteasome.

The protein localises to the cell membrane. It localises to the sarcolemma. It is found in the cytoplasm. The protein resides in the cytoskeleton. Its subcellular location is the cell projection. The protein localises to the dendrite. It localises to the golgi apparatus. Functionally, component of the sarcoglycan complex, a subcomplex of the dystrophin-glycoprotein complex which forms a link between the F-actin cytoskeleton and the extracellular matrix. This is Epsilon-sarcoglycan (SGCE) from Bos taurus (Bovine).